The primary structure comprises 281 residues: Pantothenate synthetase (281 aa).

30 to 37 is an ATP binding site; that stretch reads MGNLHLGH. Catalysis depends on His37, which acts as the Proton donor. Gln61 is a (R)-pantoate binding site. Gln61 serves as a coordination point for beta-alanine. 149 to 152 contributes to the ATP binding site; sequence GRKD. Residue Gln155 coordinates (R)-pantoate. Residues Ile178 and 186-189 each bind ATP; that span reads MSSR.

It belongs to the pantothenate synthetase family. As to quaternary structure, homodimer.

The protein resides in the cytoplasm. It catalyses the reaction (R)-pantoate + beta-alanine + ATP = (R)-pantothenate + AMP + diphosphate + H(+). It participates in cofactor biosynthesis; (R)-pantothenate biosynthesis; (R)-pantothenate from (R)-pantoate and beta-alanine: step 1/1. Its function is as follows. Catalyzes the condensation of pantoate with beta-alanine in an ATP-dependent reaction via a pantoyl-adenylate intermediate. The chain is Pantothenate synthetase from Shewanella sediminis (strain HAW-EB3).